The primary structure comprises 273 residues: MTVAAASTRPQRARGRGHLAARALDGRTRLAELFQEGSAKIRLPATFDNSMEAVIINTAGGLTGGDRMDWSIVAGPGTRIDVTTQACEKIYKASASTAEVVTSIRAGAGARVDWLPQETILFDRASLSRRLDVDLDETAEFLAVEAILLGRKAMGEAMRQGLFRDRWRIRRAGRLIHAEELRLDGDVAALTAEHAVLSGQVAFTTLLYAGPLAETYLAQVRPLVEGHMGGASQWRDKLVVRLAASDGFALRKILIPVISALRNGAPVPKVWNL.

This sequence belongs to the UreD family. In terms of assembly, ureD, UreF and UreG form a complex that acts as a GTP-hydrolysis-dependent molecular chaperone, activating the urease apoprotein by helping to assemble the nickel containing metallocenter of UreC. The UreE protein probably delivers the nickel.

The protein resides in the cytoplasm. Required for maturation of urease via the functional incorporation of the urease nickel metallocenter. In Rhizobium rhizogenes (strain K84 / ATCC BAA-868) (Agrobacterium radiobacter), this protein is Urease accessory protein UreD.